A 515-amino-acid polypeptide reads, in one-letter code: MNQPAIKHALNVKRADDFAQWYQAVIAEAELAEESGVRGCMVIKPWGYGIWERIQKLMDAEIKEAGVENCYFPLFIPLSYFTKEAEHVEGFAKEMAVVTHHRLISDGKGGLTPDPEAKLEEPLVVRPTSETVIGAAMSRWIQSWRDLPLLTNQWANVVRWEMRTRMFLRTSEFLWQEGHTAHVDEADAMKETLRALEMYRAFAEGPLAMPVIAGPKPENERFPGAVETFSIEAMMQDGKALQAGTSHYLGTTFAKAAGIQYQNKEGQQALAHTTSWGVSTRLIGGVIMTHGDDDGLRVPPQVAPQQIVILPMLRDNEGDDALLAYCEEIRASLVKLSVFGERIRVLLDKRPGKATQKRWAWVKKGMPLILEIGGRDAEGGLVSVLRRDRLWRQDAKPNFVGQAKDDFLASAATELESIQAALYDEARARRDAQIVRDVTDLEGLKGYFAEGNKYPGWVEMGWAKPTGEALDKVVEQLKALKLTIRNTPMDAEKPVGACPFTGEPAVEKILIARSY.

The protein belongs to the class-II aminoacyl-tRNA synthetase family. ProS type 3 subfamily. As to quaternary structure, homodimer.

The protein localises to the cytoplasm. The enzyme catalyses tRNA(Pro) + L-proline + ATP = L-prolyl-tRNA(Pro) + AMP + diphosphate. Its function is as follows. Catalyzes the attachment of proline to tRNA(Pro) in a two-step reaction: proline is first activated by ATP to form Pro-AMP and then transferred to the acceptor end of tRNA(Pro). This chain is Proline--tRNA ligase, found in Novosphingobium aromaticivorans (strain ATCC 700278 / DSM 12444 / CCUG 56034 / CIP 105152 / NBRC 16084 / F199).